The primary structure comprises 161 residues: Pleiotrophin-B (161 aa).

The N-terminal stretch at 1-23 (MHHQHGLFMLALLAFLLVMTVLG) is a signal peptide. 5 disulfide bridges follow: Cys-41-Cys-70, Cys-49-Cys-79, Cys-56-Cys-83, Cys-93-Cys-125, and Cys-103-Cys-135. 2 chondroitin sulfate binding regions span residues 86–93 (KKQFGAEC) and 117–125 (KRALHNAEC). Residues 136-161 (GKVTKPKLQESKKKKKEGKNKEKLLD) are disordered. Residues 141-161 (PKLQESKKKKKEGKNKEKLLD) form a chondroitin sulfate A binding region.

This sequence belongs to the pleiotrophin family. In terms of tissue distribution, expressed in high levels in brain and eye. Lower levels in bone. In the tailbud embryo stage, it is expressed exclusively in the central nervous system, especially in the hind region of the brain.

It localises to the secreted. Functionally, secreted growth factor that mediates its signal through cell-surface proteoglycan and non-proteoglycan receptors. Binds cell-surface proteoglycan receptor via their chondroitin sulfate (CS) groups. Thereby regulates many processes like cell proliferation, cell survival, cell growth, cell differentiation and cell migration. Has antibacterial activity against both Gram-positive and Gram-negative bacteria. This chain is Pleiotrophin-B (ptn-b), found in Xenopus laevis (African clawed frog).